The sequence spans 826 residues: U-box domain-containing protein 4 (826 aa).

The stretch at 172-204 forms a coiled coil; that stretch reads RSNQEILIEAVALERQKEMAEQSENNAEVEFLD. Positions 229 to 303 constitute a U-box domain; the sequence is AILADFFCPL…ANWCETNDVK (75 aa). Residues 330–501 are disordered; the sequence is GADVSARKVS…TRRDLSDFSP (172 aa). Polar residues predominate over residues 347-360; the sequence is ASSSETGKPSFSSR. Residues 391–414 show a composition bias toward basic and acidic residues; it reads DARRGSLNDFEDRSNDSRELRTDA. The residue at position 396 (S396) is a Phosphoserine. Positions 416-428 are enriched in low complexity; it reads GRSSVSSTTRGSV. Positions 492–501 are enriched in basic and acidic residues; that stretch reads TRRDLSDFSP. 7 ARM repeats span residues 530-570, 573-612, 614-653, 655-694, 696-734, 736-775, and 778-817; these read NETR…LLAK, MDNR…NLSI, DNNK…SLSV, EENK…NLSI, QENK…NLAT, PEGR…QLST, and GRFC…YFRN.

The enzyme catalyses S-ubiquitinyl-[E2 ubiquitin-conjugating enzyme]-L-cysteine + [acceptor protein]-L-lysine = [E2 ubiquitin-conjugating enzyme]-L-cysteine + N(6)-ubiquitinyl-[acceptor protein]-L-lysine.. The protein operates within protein modification; protein ubiquitination. Functionally, functions as an E3 ubiquitin ligase. This Arabidopsis thaliana (Mouse-ear cress) protein is U-box domain-containing protein 4 (PUB4).